Here is a 274-residue protein sequence, read N- to C-terminus: Octanoyl-[GcvH]:protein N-octanoyltransferase (274 aa).

The region spanning 37–242 (QGNDAVVRTW…AMKTLGATLS (206 aa)) is the BPL/LPL catalytic domain. Cysteine 141 (acyl-thioester intermediate) is an active-site residue.

Belongs to the octanoyltransferase LipL family.

The catalysed reaction is N(6)-octanoyl-L-lysyl-[glycine-cleavage complex H protein] + L-lysyl-[lipoyl-carrier protein] = N(6)-octanoyl-L-lysyl-[lipoyl-carrier protein] + L-lysyl-[glycine-cleavage complex H protein]. The protein operates within protein modification; protein lipoylation via endogenous pathway; protein N(6)-(lipoyl)lysine from octanoyl-[acyl-carrier-protein]. Functionally, catalyzes the amidotransfer (transamidation) of the octanoyl moiety from octanoyl-GcvH to the lipoyl domain of the E2 subunit of lipoate-dependent enzymes. The chain is Octanoyl-[GcvH]:protein N-octanoyltransferase from Macrococcus caseolyticus (strain JCSC5402) (Macrococcoides caseolyticum).